Here is a 198-residue protein sequence, read N- to C-terminus: Ribonuclease HII (198 aa).

Residues 10–198 (HLVAGVDEVG…PVKRALGLVS (189 aa)) enclose the RNase H type-2 domain. A divalent metal cation contacts are provided by Asp16, Glu17, and Asp108.

It belongs to the RNase HII family. The cofactor is Mn(2+). Requires Mg(2+) as cofactor.

The protein resides in the cytoplasm. It catalyses the reaction Endonucleolytic cleavage to 5'-phosphomonoester.. Functionally, endonuclease that specifically degrades the RNA of RNA-DNA hybrids. The chain is Ribonuclease HII from Salmonella schwarzengrund (strain CVM19633).